Here is a 385-residue protein sequence, read N- to C-terminus: Probable tRNA sulfurtransferase (385 aa).

Residues 57 to 160 (DGVIERVKKV…RGNAYVFTDK (104 aa)) enclose the THUMP domain. Residues 180 to 181 (ML), 205 to 206 (YY), Arg262, Gly284, and Gln293 contribute to the ATP site.

It belongs to the ThiI family.

It localises to the cytoplasm. It catalyses the reaction [ThiI sulfur-carrier protein]-S-sulfanyl-L-cysteine + a uridine in tRNA + 2 reduced [2Fe-2S]-[ferredoxin] + ATP + H(+) = [ThiI sulfur-carrier protein]-L-cysteine + a 4-thiouridine in tRNA + 2 oxidized [2Fe-2S]-[ferredoxin] + AMP + diphosphate. The catalysed reaction is [ThiS sulfur-carrier protein]-C-terminal Gly-Gly-AMP + S-sulfanyl-L-cysteinyl-[cysteine desulfurase] + AH2 = [ThiS sulfur-carrier protein]-C-terminal-Gly-aminoethanethioate + L-cysteinyl-[cysteine desulfurase] + A + AMP + 2 H(+). Its pathway is cofactor biosynthesis; thiamine diphosphate biosynthesis. In terms of biological role, catalyzes the ATP-dependent transfer of a sulfur to tRNA to produce 4-thiouridine in position 8 of tRNAs, which functions as a near-UV photosensor. Also catalyzes the transfer of sulfur to the sulfur carrier protein ThiS, forming ThiS-thiocarboxylate. This is a step in the synthesis of thiazole, in the thiamine biosynthesis pathway. The sulfur is donated as persulfide by IscS. In Clostridium perfringens (strain ATCC 13124 / DSM 756 / JCM 1290 / NCIMB 6125 / NCTC 8237 / Type A), this protein is Probable tRNA sulfurtransferase.